The following is a 309-amino-acid chain: RING finger protein mug145 (309 aa).

Residues 23-43 (ILLFALVIILSVIFINFFFFY) traverse the membrane as a helical segment. An RING-type; atypical zinc finger spans residues 205-247 (CIICYADYAFDDILRVLPCEHVFHTQCIDTWMTTMKASCPLCN).

The protein localises to the membrane. In terms of biological role, has a role in meiosis. The chain is RING finger protein mug145 (mug145) from Schizosaccharomyces pombe (strain 972 / ATCC 24843) (Fission yeast).